The following is a 202-amino-acid chain: Ion-translocating oxidoreductase complex subunit G (202 aa).

A helical transmembrane segment spans residues 11 to 31 (ACLMGFFSFFSLSSVIFVKNI). At Thr-176 the chain carries FMN phosphoryl threonine.

This sequence belongs to the RnfG family. As to quaternary structure, the complex is composed of six subunits: RnfA, RnfB, RnfC, RnfD, RnfE and RnfG. FMN is required as a cofactor.

Its subcellular location is the cell inner membrane. Part of a membrane-bound complex that couples electron transfer with translocation of ions across the membrane. This Buchnera aphidicola subsp. Schizaphis graminum (strain Sg) protein is Ion-translocating oxidoreductase complex subunit G.